Consider the following 862-residue polypeptide: Valine--tRNA ligase (862 aa).

The short motif at 43 to 53 is the 'HIGH' region element; sequence PNVTGSLHMGH. Zn(2+) contacts are provided by Cys-176, Cys-179, Cys-344, Cys-347, Cys-417, Cys-420, Cys-438, and Cys-441. The short motif at 528–532 is the 'KMSKS' region element; that stretch reads KMSKS. Lys-531 is an ATP binding site. Residues 802-862 adopt a coiled-coil conformation; that stretch reads RRRQEKRLKE…RIREALSQIG (61 aa).

This sequence belongs to the class-I aminoacyl-tRNA synthetase family. ValS type 1 subfamily. As to quaternary structure, monomer. Zn(2+) serves as cofactor.

It is found in the cytoplasm. The enzyme catalyses tRNA(Val) + L-valine + ATP = L-valyl-tRNA(Val) + AMP + diphosphate. In terms of biological role, catalyzes the attachment of valine to tRNA(Val). As ValRS can inadvertently accommodate and process structurally similar amino acids such as threonine, to avoid such errors, it has a 'posttransfer' editing activity that hydrolyzes mischarged Thr-tRNA(Val) in a tRNA-dependent manner. This Thermus thermophilus (strain ATCC BAA-163 / DSM 7039 / HB27) protein is Valine--tRNA ligase.